Consider the following 239-residue polypeptide: NAD-dependent protein deacylase (239 aa).

One can recognise a Deacetylase sirtuin-type domain in the interval 1–234 (MENLNIVTLT…KKVYDYLREK (234 aa)). NAD(+)-binding positions include 11-30 (GAGI…DGLW) and 89-92 (QNVD). The Proton acceptor role is filled by His-107. Zn(2+)-binding residues include Cys-115, Cys-118, Cys-136, and Cys-139. NAD(+) is bound by residues 176-178 (GTS), 202-204 (NPE), and Ala-220.

Belongs to the sirtuin family. Class III subfamily. It depends on Zn(2+) as a cofactor.

The protein localises to the cytoplasm. The enzyme catalyses N(6)-acetyl-L-lysyl-[protein] + NAD(+) + H2O = 2''-O-acetyl-ADP-D-ribose + nicotinamide + L-lysyl-[protein]. In terms of biological role, NAD-dependent protein deacetylase which modulates the activities of several proteins which are inactive in their acetylated form. This chain is NAD-dependent protein deacylase, found in Aquifex aeolicus (strain VF5).